Reading from the N-terminus, the 506-residue chain is MKQILFMDTTLRDGEQSPGVNLNEQEKLQIARQLERLGIHVMEAGFAAASEGDFQSVKRIANTIQNATVMSLARAKESDIRRAYEAVKGAVSPRLHVFLATSDIHMKYKLCMSKEDVLDSIYRSVTLGKSLFPTVQFSAEDATRTARDFLAEAVEVAIRAGANVINIPDTVGYTNPEEYYALFKYLQESVPSYEKAIFSCHCHDDLGMAVANSLAAVEGGALQVEGTINGIGERAGNAALEEVAVALHIRKDFYKAEPSMTLKEIKATSTLVSRLTGMVVSKNKAIVGANAFAHESGIHQDGVLKEVTTYEIIEPALVGESQNLFVLGKHSGRHAFTEKMKELGYEFTNDERDAVFEAFKKLADRKKEITEEDLRALMLGEAAFAAQQYNITQLQVHFVSNSTQCATVVLKDEEGNVFEDAATGSGSIEAIYNAIQRILGLECELADYRIQSITQGQDALAHVHVELKEGAHQVSGFGVAQDVLEASARAYVHAAGKLKSFIQLVK.

The Pyruvate carboxyltransferase domain occupies 4–266 (ILFMDTTLRD…EPSMTLKEIK (263 aa)). Mn(2+) is bound by residues D13, H201, H203, and N237. Residues 390-506 (NITQLQVHFV…KLKSFIQLVK (117 aa)) form a regulatory domain region.

The protein belongs to the alpha-IPM synthase/homocitrate synthase family. LeuA type 1 subfamily. As to quaternary structure, homodimer. Mn(2+) serves as cofactor.

The protein resides in the cytoplasm. It catalyses the reaction 3-methyl-2-oxobutanoate + acetyl-CoA + H2O = (2S)-2-isopropylmalate + CoA + H(+). It functions in the pathway amino-acid biosynthesis; L-leucine biosynthesis; L-leucine from 3-methyl-2-oxobutanoate: step 1/4. Its function is as follows. Catalyzes the condensation of the acetyl group of acetyl-CoA with 3-methyl-2-oxobutanoate (2-ketoisovalerate) to form 3-carboxy-3-hydroxy-4-methylpentanoate (2-isopropylmalate). This Bacillus anthracis (strain A0248) protein is 2-isopropylmalate synthase.